Here is a 131-residue protein sequence, read N- to C-terminus: Phosphoribosyl-AMP cyclohydrolase (131 aa).

D89 contacts Mg(2+). C90 lines the Zn(2+) pocket. Mg(2+) is bound by residues D91 and D93. Residues C106 and C113 each contribute to the Zn(2+) site.

Belongs to the PRA-CH family. Homodimer. Mg(2+) serves as cofactor. The cofactor is Zn(2+).

The protein resides in the cytoplasm. The enzyme catalyses 1-(5-phospho-beta-D-ribosyl)-5'-AMP + H2O = 1-(5-phospho-beta-D-ribosyl)-5-[(5-phospho-beta-D-ribosylamino)methylideneamino]imidazole-4-carboxamide. It participates in amino-acid biosynthesis; L-histidine biosynthesis; L-histidine from 5-phospho-alpha-D-ribose 1-diphosphate: step 3/9. Catalyzes the hydrolysis of the adenine ring of phosphoribosyl-AMP. In Bifidobacterium longum (strain DJO10A), this protein is Phosphoribosyl-AMP cyclohydrolase.